The following is a 699-amino-acid chain: Elongation factor G (699 aa).

The region spanning 8–283 is the tr-type G domain; that stretch reads EHIRNIGICA…AVVDFLPSPI (276 aa). GTP is bound by residues 17–24, 81–85, and 135–138; these read AHIDAGKT, DTPGH, and NKMD.

It belongs to the TRAFAC class translation factor GTPase superfamily. Classic translation factor GTPase family. EF-G/EF-2 subfamily.

Its subcellular location is the cytoplasm. Catalyzes the GTP-dependent ribosomal translocation step during translation elongation. During this step, the ribosome changes from the pre-translocational (PRE) to the post-translocational (POST) state as the newly formed A-site-bound peptidyl-tRNA and P-site-bound deacylated tRNA move to the P and E sites, respectively. Catalyzes the coordinated movement of the two tRNA molecules, the mRNA and conformational changes in the ribosome. This Rickettsia sibirica (strain ATCC VR-151 / 246) protein is Elongation factor G.